Reading from the N-terminus, the 98-residue chain is N(2)-fixation sustaining protein CowN (98 aa).

Belongs to the CowN family.

Its function is as follows. Is required to sustain N(2)-dependent growth in the presence of low levels of carbon monoxide (CO). Probably acts by protecting the N(2) fixation ability of the nitrogenase complex, which is inactivated in the presence of CO. This chain is N(2)-fixation sustaining protein CowN, found in Paramagnetospirillum magneticum (strain ATCC 700264 / AMB-1) (Magnetospirillum magneticum).